Consider the following 213-residue polypeptide: Dephospho-CoA kinase (213 aa).

Residues 3-202 enclose the DPCK domain; it reads RIGLTGGIGS…QSYLALADKH (200 aa). ATP is bound at residue 11–16; sequence GSGKTR.

Belongs to the CoaE family.

It is found in the cytoplasm. It carries out the reaction 3'-dephospho-CoA + ATP = ADP + CoA + H(+). It functions in the pathway cofactor biosynthesis; coenzyme A biosynthesis; CoA from (R)-pantothenate: step 5/5. Catalyzes the phosphorylation of the 3'-hydroxyl group of dephosphocoenzyme A to form coenzyme A. The polypeptide is Dephospho-CoA kinase (Bordetella avium (strain 197N)).